The sequence spans 423 residues: COP9 signalosome complex subunit 3 (423 aa).

Positions N197–E365 constitute a PCI domain. Residues F403–S423 form a disordered region.

Belongs to the CSN3 family. In terms of assembly, component of the CSN complex, probably composed of cops1, cops2, cops3, cops4, cops5, cops6, cops7, cops8 and cops9.

The protein localises to the cytoplasm. The protein resides in the nucleus. In terms of biological role, component of the COP9 signalosome complex (CSN), a complex involved in various cellular and developmental processes. The CSN complex is an essential regulator of the ubiquitin (Ubl) conjugation pathway by mediating the deneddylation of the cullin subunits of E3 ligase complexes, leading to modify the Ubl ligase activity. The chain is COP9 signalosome complex subunit 3 (cops3) from Xenopus tropicalis (Western clawed frog).